We begin with the raw amino-acid sequence, 264 residues long: Glucosamine-6-phosphate deaminase (264 aa).

Residue aspartate 72 is the Proton acceptor; for enolization step of the active site. Aspartate 141 serves as the catalytic For ring-opening step. Residue histidine 143 is the Proton acceptor; for ring-opening step of the active site. Glutamate 148 serves as the catalytic For ring-opening step.

This sequence belongs to the glucosamine/galactosamine-6-phosphate isomerase family. NagB subfamily. Homohexamer.

It carries out the reaction alpha-D-glucosamine 6-phosphate + H2O = beta-D-fructose 6-phosphate + NH4(+). Its pathway is amino-sugar metabolism; N-acetylneuraminate degradation; D-fructose 6-phosphate from N-acetylneuraminate: step 5/5. With respect to regulation, allosterically activated by N-acetylglucosamine 6-phosphate (GlcNAc6P). In terms of biological role, catalyzes the reversible isomerization-deamination of glucosamine 6-phosphate (GlcN6P) to form fructose 6-phosphate (Fru6P) and ammonium ion. This chain is Glucosamine-6-phosphate deaminase, found in Glaesserella parasuis serovar 5 (strain SH0165) (Haemophilus parasuis).